A 956-amino-acid polypeptide reads, in one-letter code: RNA-silencing factor ers1 (956 aa).

The protein resides in the cytoplasm. The protein localises to the cytoskeleton. It localises to the microtubule organizing center. Its subcellular location is the spindle pole body. Functionally, involved in RNAi-dependent heterochromatin formation and centromeric silencing. Required for the conversion of centromeric pre-small interfering RNA transcripts into small interfering RNAs, histone H3 'Lys9' methylation, and the recruitment of the RITS complex to centromeric sequences. In Schizosaccharomyces pombe (strain 972 / ATCC 24843) (Fission yeast), this protein is RNA-silencing factor ers1 (ers1).